A 367-amino-acid chain; its full sequence is tRNA-specific 2-thiouridylase MnmA (367 aa).

ATP contacts are provided by residues 13-20 (GLSGGVDS) and methionine 39. An interaction with target base in tRNA region spans residues 99–101 (NPD). The active-site Nucleophile is cysteine 104. A disulfide bond links cysteine 104 and cysteine 200. ATP is bound at residue glycine 128. Residues 150–152 (KDQ) form an interaction with tRNA region. Cysteine 200 functions as the Cysteine persulfide intermediate in the catalytic mechanism. The tract at residues 307–308 (RY) is interaction with tRNA.

The protein belongs to the MnmA/TRMU family.

It localises to the cytoplasm. The catalysed reaction is S-sulfanyl-L-cysteinyl-[protein] + uridine(34) in tRNA + AH2 + ATP = 2-thiouridine(34) in tRNA + L-cysteinyl-[protein] + A + AMP + diphosphate + H(+). Catalyzes the 2-thiolation of uridine at the wobble position (U34) of tRNA, leading to the formation of s(2)U34. This chain is tRNA-specific 2-thiouridylase MnmA, found in Neisseria meningitidis serogroup C (strain 053442).